The primary structure comprises 229 residues: Probable GTP-binding protein EngB (229 aa).

In terms of domain architecture, EngB-type G spans 53 to 228 (DLPEVAFAGR…RAEIVRLCID (176 aa)). GTP contacts are provided by residues 61-68 (GRSNVGKS), 88-92 (GRTRE), 106-109 (DLPG), 173-176 (TKAD), and 207-209 (TSS). Mg(2+) contacts are provided by Ser68 and Thr90.

It belongs to the TRAFAC class TrmE-Era-EngA-EngB-Septin-like GTPase superfamily. EngB GTPase family. Mg(2+) serves as cofactor.

Functionally, necessary for normal cell division and for the maintenance of normal septation. This chain is Probable GTP-binding protein EngB, found in Caulobacter vibrioides (strain NA1000 / CB15N) (Caulobacter crescentus).